The sequence spans 470 residues: Cytochrome P450 monooxygenase FUM2 (470 aa).

A heme-binding site is contributed by cysteine 414.

Belongs to the cytochrome P450 family. Requires heme as cofactor.

The protein operates within mycotoxin biosynthesis. In terms of biological role, cytochrome P450 monooxygenase; part of the gene cluster that mediates the biosynthesis of fumonisins B1 (FB1), B2 (FB2), B3 (FB3), and B4 (FB4), which are carcinogenic mycotoxins. Within the pathway, FUM2 performs the C-10 hydroxylation present in FB2 and FB4 and which occurs early in the biosynthesis. The biosynthesis starts with the FUM1-catalyzed carbon chain assembly from one molecule of acetyl-CoA, eight molecules of malonyl-CoA, and two molecules of methionine (in S-adenosyl form). The C18 polyketide chain is released from the enzyme by a nucleophilic attack of a carbanion, which is derived from R-carbon of alanine by decarboxylation, on the carbonyl carbon of polyketide acyl chain. This step is catalyzed by the pyridoxal 5'-phosphate-dependent aminoacyl transferase FUM8. The resultant 3-keto intermediate is then stereospecifically reduced to a 3-hydroxyl product by reductase FUM13. Subsequent oxidations at C-10 by the cytochrome P450 monooxygenase FUM2, C-14 and C-15 by FUM6, FUM12 or FUM15, tricarballylic esterification of the hydroxyl groups on C-14 and C-15 by acyltransferase FUM14, and C-5 hydroxylation by 2-keto-glutarate-dependent dioxygenase FUM3 furnish the biosynthesis of fumonisins. The tricarballylic moieties are most likely derived from the citric acid cycle, and their addition to the carbon backbone may involve FUM7, FUM10, FUM11 and FUM14. The chain is Cytochrome P450 monooxygenase FUM2 from Gibberella moniliformis (strain M3125 / FGSC 7600) (Maize ear and stalk rot fungus).